The primary structure comprises 312 residues: tRNA uridine(34) hydroxylase (312 aa).

Positions 130–225 constitute a Rhodanese domain; that stretch reads RGDEVVFFDG…YGEQFGNKGL (96 aa). The active-site Cysteine persulfide intermediate is cysteine 185.

It belongs to the TrhO family.

The catalysed reaction is uridine(34) in tRNA + AH2 + O2 = 5-hydroxyuridine(34) in tRNA + A + H2O. In terms of biological role, catalyzes oxygen-dependent 5-hydroxyuridine (ho5U) modification at position 34 in tRNAs. The polypeptide is tRNA uridine(34) hydroxylase (Corynebacterium glutamicum (strain R)).